Here is a 464-residue protein sequence, read N- to C-terminus: ATP synthase subunit beta 2 (464 aa).

Position 147–154 (147–154) interacts with ATP; it reads GGAGVGKT.

It belongs to the ATPase alpha/beta chains family. In terms of assembly, F-type ATPases have 2 components, CF(1) - the catalytic core - and CF(0) - the membrane proton channel. CF(1) has five subunits: alpha(3), beta(3), gamma(1), delta(1), epsilon(1). CF(0) has four main subunits: a(1), b(1), b'(1) and c(9-12).

It is found in the cell inner membrane. The catalysed reaction is ATP + H2O + 4 H(+)(in) = ADP + phosphate + 5 H(+)(out). Functionally, produces ATP from ADP in the presence of a proton gradient across the membrane. The catalytic sites are hosted primarily by the beta subunits. The polypeptide is ATP synthase subunit beta 2 (Cereibacter sphaeroides (strain ATCC 17029 / ATH 2.4.9) (Rhodobacter sphaeroides)).